A 137-amino-acid chain; its full sequence is Nucleoside diphosphate kinase (137 aa).

6 residues coordinate ATP: K9, F57, R85, T91, R102, and N112. Residue H115 is the Pros-phosphohistidine intermediate of the active site.

Belongs to the NDK family. As to quaternary structure, homotetramer. The cofactor is Mg(2+).

The protein localises to the cytoplasm. It catalyses the reaction a 2'-deoxyribonucleoside 5'-diphosphate + ATP = a 2'-deoxyribonucleoside 5'-triphosphate + ADP. It carries out the reaction a ribonucleoside 5'-diphosphate + ATP = a ribonucleoside 5'-triphosphate + ADP. Major role in the synthesis of nucleoside triphosphates other than ATP. The ATP gamma phosphate is transferred to the NDP beta phosphate via a ping-pong mechanism, using a phosphorylated active-site intermediate. This Campylobacter hominis (strain ATCC BAA-381 / DSM 21671 / CCUG 45161 / LMG 19568 / NCTC 13146 / CH001A) protein is Nucleoside diphosphate kinase.